A 234-amino-acid chain; its full sequence is UDP-2,3-diacylglucosamine hydrolase (234 aa).

5 residues coordinate Mn(2+): Asp-9, His-11, Asp-42, Asn-80, and His-115. 80 to 81 (NR) lines the substrate pocket. Positions 123, 161, 165, 168, and 196 each coordinate substrate. Mn(2+)-binding residues include His-196 and His-198.

The protein belongs to the LpxH family. Mn(2+) serves as cofactor.

It is found in the cell inner membrane. The catalysed reaction is UDP-2-N,3-O-bis[(3R)-3-hydroxytetradecanoyl]-alpha-D-glucosamine + H2O = 2-N,3-O-bis[(3R)-3-hydroxytetradecanoyl]-alpha-D-glucosaminyl 1-phosphate + UMP + 2 H(+). The protein operates within glycolipid biosynthesis; lipid IV(A) biosynthesis; lipid IV(A) from (3R)-3-hydroxytetradecanoyl-[acyl-carrier-protein] and UDP-N-acetyl-alpha-D-glucosamine: step 4/6. Its function is as follows. Hydrolyzes the pyrophosphate bond of UDP-2,3-diacylglucosamine to yield 2,3-diacylglucosamine 1-phosphate (lipid X) and UMP by catalyzing the attack of water at the alpha-P atom. Involved in the biosynthesis of lipid A, a phosphorylated glycolipid that anchors the lipopolysaccharide to the outer membrane of the cell. The sequence is that of UDP-2,3-diacylglucosamine hydrolase from Histophilus somni (strain 2336) (Haemophilus somnus).